The following is a 523-amino-acid chain: DNA-directed RNA polymerase subunit Rpo2N (523 aa).

The interval 501-523 (SSMGVEGIPGISMETTSTTSADD) is disordered. Polar residues predominate over residues 513-523 (METTSTTSADD).

Belongs to the RNA polymerase beta chain family. As to quaternary structure, part of the RNA polymerase complex.

The protein resides in the cytoplasm. It carries out the reaction RNA(n) + a ribonucleoside 5'-triphosphate = RNA(n+1) + diphosphate. In terms of biological role, DNA-dependent RNA polymerase (RNAP) catalyzes the transcription of DNA into RNA using the four ribonucleoside triphosphates as substrates. The Rpo2 subunit (Rpo2N and Rpo2C in this organism) is implicated in DNA promoter recognition and in nucleotide binding. This is DNA-directed RNA polymerase subunit Rpo2N from Halobacterium salinarum (strain ATCC 29341 / DSM 671 / R1).